The sequence spans 206 residues: Cytochrome b-245 chaperone 1 homolog (206 aa).

A helical transmembrane segment spans residues 21-43; it reads GIRSWSILVGIASVGLAAAYYSS. Residues 172-206 form a disordered region; that stretch reads ADDDYPDDDDGIEDLGLGDSSDSQDDPDGDDDEEH. Acidic residues-rich tracts occupy residues 174–184 and 193–206; these read DDYPDDDDGIE and DSQDDPDGDDDEEH.

It belongs to the CYBC1 family.

The protein localises to the endoplasmic reticulum membrane. Functionally, functions as a chaperone necessary for a stable expression of the CYBA and CYBB subunits of the cytochrome b-245 heterodimer. The polypeptide is Cytochrome b-245 chaperone 1 homolog (Danio rerio (Zebrafish)).